The following is an 82-amino-acid chain: Progonadoliberin-3 (82 aa).

The first 23 residues, 1-23 (MDLSSKTVVQVVMLALIAQVTFS), serve as a signal peptide directing secretion. Glutamine 24 carries the post-translational modification Pyrrolidone carboxylic acid. Glycine 33 is modified (glycine amide).

It belongs to the GnRH family.

It localises to the secreted. Functionally, stimulates the secretion of gonadotropins. In Oncorhynchus masou (Cherry salmon), this protein is Progonadoliberin-3 (gnrh3).